A 314-amino-acid polypeptide reads, in one-letter code: Probable 5-dehydro-4-deoxyglucarate dehydratase (314 aa).

It belongs to the DapA family.

The enzyme catalyses 5-dehydro-4-deoxy-D-glucarate + H(+) = 2,5-dioxopentanoate + CO2 + H2O. Its pathway is carbohydrate acid metabolism; D-glucarate degradation; 2,5-dioxopentanoate from D-glucarate: step 2/2. This chain is Probable 5-dehydro-4-deoxyglucarate dehydratase, found in Bradyrhizobium diazoefficiens (strain JCM 10833 / BCRC 13528 / IAM 13628 / NBRC 14792 / USDA 110).